Here is a 95-residue protein sequence, read N- to C-terminus: Small ribosomal subunit protein bS6 (95 aa).

This sequence belongs to the bacterial ribosomal protein bS6 family.

Functionally, binds together with bS18 to 16S ribosomal RNA. This is Small ribosomal subunit protein bS6 from Bacillus cytotoxicus (strain DSM 22905 / CIP 110041 / 391-98 / NVH 391-98).